We begin with the raw amino-acid sequence, 326 residues long: B3 domain-containing protein At5g60130 (326 aa).

Positions 12-110 form a DNA-binding region, TF-B3; sequence PKFFKVYLPD…CFHFCIYEHR (99 aa). Residues 124–222 form a disordered region; the sequence is EEIKVESDSD…DEDERQYLDD (99 aa). Residues 143–199 show a composition bias toward acidic residues; that stretch reads LSLDEDDDDSDYNCGEDNDSDDYADEAAVEKDDNDADDEDVDNVADDVPVEDDDYVE.

Its subcellular location is the nucleus. This Arabidopsis thaliana (Mouse-ear cress) protein is B3 domain-containing protein At5g60130.